Here is a 288-residue protein sequence, read N- to C-terminus: NAD kinase (288 aa).

The active-site Proton acceptor is aspartate 73. NAD(+)-binding positions include 73-74, arginine 78, 144-145, aspartate 174, 185-190, and alanine 209; these read DG, NE, and TAYSLS.

The protein belongs to the NAD kinase family. A divalent metal cation serves as cofactor.

The protein localises to the cytoplasm. It catalyses the reaction NAD(+) + ATP = ADP + NADP(+) + H(+). In terms of biological role, involved in the regulation of the intracellular balance of NAD and NADP, and is a key enzyme in the biosynthesis of NADP. Catalyzes specifically the phosphorylation on 2'-hydroxyl of the adenosine moiety of NAD to yield NADP. This chain is NAD kinase, found in Porphyromonas gingivalis (strain ATCC 33277 / DSM 20709 / CIP 103683 / JCM 12257 / NCTC 11834 / 2561).